Consider the following 319-residue polypeptide: Ferrochelatase (319 aa).

Residues His-193 and Glu-274 each coordinate Fe cation.

This sequence belongs to the ferrochelatase family.

It is found in the cytoplasm. The catalysed reaction is heme b + 2 H(+) = protoporphyrin IX + Fe(2+). The protein operates within porphyrin-containing compound metabolism; protoheme biosynthesis; protoheme from protoporphyrin-IX: step 1/1. Its function is as follows. Catalyzes the ferrous insertion into protoporphyrin IX. The protein is Ferrochelatase of Actinobacillus pleuropneumoniae serotype 5b (strain L20).